A 95-amino-acid chain; its full sequence is Large ribosomal subunit protein uL23 (95 aa).

The protein belongs to the universal ribosomal protein uL23 family. Part of the 50S ribosomal subunit. Contacts protein L29, and trigger factor when it is bound to the ribosome.

Its function is as follows. One of the early assembly proteins it binds 23S rRNA. One of the proteins that surrounds the polypeptide exit tunnel on the outside of the ribosome. Forms the main docking site for trigger factor binding to the ribosome. This chain is Large ribosomal subunit protein uL23, found in Bacillus subtilis (strain 168).